We begin with the raw amino-acid sequence, 203 residues long: ATP-dependent Clp protease proteolytic subunit 2 (203 aa).

Ser101 (nucleophile) is an active-site residue. His126 is a catalytic residue.

This sequence belongs to the peptidase S14 family. In terms of assembly, fourteen ClpP subunits assemble into 2 heptameric rings which stack back to back to give a disk-like structure with a central cavity, resembling the structure of eukaryotic proteasomes.

It is found in the cytoplasm. The catalysed reaction is Hydrolysis of proteins to small peptides in the presence of ATP and magnesium. alpha-casein is the usual test substrate. In the absence of ATP, only oligopeptides shorter than five residues are hydrolyzed (such as succinyl-Leu-Tyr-|-NHMec, and Leu-Tyr-Leu-|-Tyr-Trp, in which cleavage of the -Tyr-|-Leu- and -Tyr-|-Trp bonds also occurs).. Its function is as follows. Cleaves peptides in various proteins in a process that requires ATP hydrolysis. Has a chymotrypsin-like activity. Plays a major role in the degradation of misfolded proteins. The polypeptide is ATP-dependent Clp protease proteolytic subunit 2 (Prochlorococcus marinus (strain MIT 9312)).